A 90-amino-acid polypeptide reads, in one-letter code: Progonadoliberin-3 (90 aa).

Positions 1–23 are cleaved as a signal peptide; that stretch reads MEASSRVTVQVLLLALVVQVTLS. Gln-24 carries the post-translational modification Pyrrolidone carboxylic acid. Gly-33 carries the glycine amide modification.

Belongs to the GnRH family.

The protein localises to the secreted. Its function is as follows. Stimulates the secretion of gonadotropins. The sequence is that of Progonadoliberin-3 (gnrh3) from Sparus aurata (Gilthead sea bream).